Reading from the N-terminus, the 624-residue chain is 1-deoxy-D-xylulose-5-phosphate synthase (624 aa).

Residues H80 and 121 to 123 (GHS) contribute to the thiamine diphosphate site. D152 contacts Mg(2+). Residues 153–154 (GA), N181, Y288, and E370 each bind thiamine diphosphate. N181 contacts Mg(2+).

This sequence belongs to the transketolase family. DXPS subfamily. In terms of assembly, homodimer. Mg(2+) serves as cofactor. It depends on thiamine diphosphate as a cofactor.

The enzyme catalyses D-glyceraldehyde 3-phosphate + pyruvate + H(+) = 1-deoxy-D-xylulose 5-phosphate + CO2. The protein operates within metabolic intermediate biosynthesis; 1-deoxy-D-xylulose 5-phosphate biosynthesis; 1-deoxy-D-xylulose 5-phosphate from D-glyceraldehyde 3-phosphate and pyruvate: step 1/1. In terms of biological role, catalyzes the acyloin condensation reaction between C atoms 2 and 3 of pyruvate and glyceraldehyde 3-phosphate to yield 1-deoxy-D-xylulose-5-phosphate (DXP). This chain is 1-deoxy-D-xylulose-5-phosphate synthase, found in Proteus mirabilis (strain HI4320).